A 141-amino-acid polypeptide reads, in one-letter code: MPDAVGRELPRDGTVLAFDYGEKKIGVALGNFITREARALTILPNITVEGRFEAVAALIQEWNPVQLIVGMPVNPEGGEQPSMKLARRFGNQLNGRFGLPVEWVDERYTSRAASMAGARRGELDAEAARIILQQYFDQFPL.

Belongs to the YqgF nuclease family.

Its subcellular location is the cytoplasm. Its function is as follows. Could be a nuclease involved in processing of the 5'-end of pre-16S rRNA. In Cupriavidus necator (strain ATCC 17699 / DSM 428 / KCTC 22496 / NCIMB 10442 / H16 / Stanier 337) (Ralstonia eutropha), this protein is Putative pre-16S rRNA nuclease.